The chain runs to 207 residues: Large ribosomal subunit protein uL4 (207 aa).

The interval 49–78 (HAVKNRSAVSGGGRKPWRQKGTGRARQGSI) is disordered.

It belongs to the universal ribosomal protein uL4 family. Part of the 50S ribosomal subunit.

Functionally, one of the primary rRNA binding proteins, this protein initially binds near the 5'-end of the 23S rRNA. It is important during the early stages of 50S assembly. It makes multiple contacts with different domains of the 23S rRNA in the assembled 50S subunit and ribosome. Forms part of the polypeptide exit tunnel. In Streptococcus uberis (strain ATCC BAA-854 / 0140J), this protein is Large ribosomal subunit protein uL4.